The sequence spans 674 residues: Leucine-rich repeat transmembrane protein FLRT1 (674 aa).

Positions 1 to 51 are cleaved as a signal peptide; sequence MVVAHSAATATTTPAATVTATVVMTTATMDLRDWLFLCYGLIAFLTEVIDS. At 52–552 the chain is on the extracellular side; the sequence is TTCPSVCRCD…QNAGPMAGLP (501 aa). 2 cysteine pairs are disulfide-bonded: C54–C60 and C58–C67. Residues 54-80 enclose the LRRNT domain; sequence CPSVCRCDNGFIYCNDRGLTSIPSDIP. LRR repeat units follow at residues 81 to 105, 106 to 126, 127 to 149, 151 to 175, 176 to 197, 198 to 220, 222 to 246, 247 to 269, 270 to 292, and 293 to 316; these read DDAT…LKTK, VKVQ…INLP, RSLR…SLAR, PLLE…AFAD, SKQL…SGLP, HTLE…AFKG, NSLR…TFSR, LQNL…NLPS, AHLQ…TLAK, and MREL…LFDD. Residue N305 is glycosylated (N-linked (GlcNAc...) asparagine). Residues 328 to 379 enclose the LRRCT domain; that stretch reads NPWFCGCNLMWLRDWVRARAAVVNVRGLMCQGPEKVRGMAIKDITSEMDECF. C332 and C357 are oxidised to a cystine. One can recognise a Fibronectin type-III domain in the interval 437–532; sequence KTLVIQVKPL…VCAKAETADS (96 aa). A helical membrane pass occupies residues 553–573; sequence LAGIIGGAVALVFLFLVLGAI. Residues 574–674 lie on the Cytoplasmic side of the membrane; sequence CWYVHRAGEL…GIPDVDYSYT (101 aa). Phosphotyrosine occurs at positions 600, 633, and 671.

In terms of assembly, interacts with FGFR1. Interacts (via extracellular domain) with ADGRL1/LPHN1 and ADGRL3 (via olfactomedin-like domain). Post-translationally, phosphorylated in response to FGFR1 signaling, but is not a direct substrate of FGFR1 or SRC. A mutant where the Tyr phosphorylation sites have been replaced by Phe displays constitutive FGFR1-dependent activation of downstream MAP kinases. In terms of processing, N-glycosylated. Proteolytic cleavage in the juxtamembrane region gives rise to a soluble ectodomain. In terms of tissue distribution, detected in brain (at protein level).

The protein localises to the cell membrane. It is found in the endoplasmic reticulum membrane. Its subcellular location is the cytoplasmic vesicle membrane. It localises to the cytoplasm. The protein resides in the perinuclear region. The protein localises to the cell junction. It is found in the focal adhesion. Its subcellular location is the secreted. It localises to the cell projection. The protein resides in the neuron projection. In terms of biological role, plays a role in fibroblast growth factor-mediated signaling cascades that lead to the activation of MAP kinases. Promotes neurite outgrowth via FGFR1-mediated activation of downstream MAP kinases. Promotes an increase both in neurite number and in neurite length. May play a role in cell-cell adhesion and cell guidance via its interaction with ADGRL1/LPHN1 and ADGRL3. This chain is Leucine-rich repeat transmembrane protein FLRT1, found in Mus musculus (Mouse).